A 208-amino-acid chain; its full sequence is Small ribosomal subunit protein uS4 (208 aa).

The interval 29-48 (MERRPYGPGQHGRARRKQDS) is disordered. The 61-residue stretch at 95 to 155 (QRLDALVLRA…ERSEKMVPFQ (61 aa)) folds into the S4 RNA-binding domain.

The protein belongs to the universal ribosomal protein uS4 family. As to quaternary structure, part of the 30S ribosomal subunit. Contacts protein S5. The interaction surface between S4 and S5 is involved in control of translational fidelity.

In terms of biological role, one of the primary rRNA binding proteins, it binds directly to 16S rRNA where it nucleates assembly of the body of the 30S subunit. With S5 and S12 plays an important role in translational accuracy. The polypeptide is Small ribosomal subunit protein uS4 (Micrococcus luteus (strain ATCC 4698 / DSM 20030 / JCM 1464 / CCM 169 / CCUG 5858 / IAM 1056 / NBRC 3333 / NCIMB 9278 / NCTC 2665 / VKM Ac-2230) (Micrococcus lysodeikticus)).